A 219-amino-acid polypeptide reads, in one-letter code: DAN domain family member 5 (219 aa).

The first 19 residues, 1 to 19, serve as a signal peptide directing secretion; that stretch reads MLLFRAASLLPLLCFTVGA. 4 disulfides stabilise this stretch: Cys118/Cys165, Cys132/Cys179, Cys142/Cys195, and Cys146/Cys197. In terms of domain architecture, CTCK spans 118 to 198; it reads CHALPFIQNV…VELVEECECE (81 aa).

This sequence belongs to the DAN family. In terms of assembly, interacts with nr1-a.

It localises to the secreted. In terms of biological role, plays an important role in regulating the left-right axis by blocking a tgfb1 cascade in the right posterior paraxial mesoderm. Functions as an inhibitor of bmp, tgfb1, nodal, activin and wnt signaling in the ectoderm. May inhibit mesodermal signals, probably through an inhibition of nodal/activin pathways. Seems to regulates cell fate specification and competence before the onset of neural induction. Expression in the entire ectodermal region prior to gastrulation might act to prevent fate specification in the ectoderm and ensure the maintenance of the stem-cell-like properties exhibited by ectodermal cells. The chain is DAN domain family member 5 (dand5) from Xenopus tropicalis (Western clawed frog).